We begin with the raw amino-acid sequence, 182 residues long: UPF0587 protein YCR090C (182 aa).

Residues cysteine 36, cysteine 39, cysteine 70, and cysteine 73 each coordinate Zn(2+).

It belongs to the UPF0587 family.

The polypeptide is UPF0587 protein YCR090C (Saccharomyces cerevisiae (strain ATCC 204508 / S288c) (Baker's yeast)).